Reading from the N-terminus, the 436-residue chain is Trigger factor (436 aa).

The PPIase FKBP-type domain occupies 163–248 (GDRVVLDFAG…VKEVAEGVLP (86 aa)).

It belongs to the FKBP-type PPIase family. Tig subfamily.

It localises to the cytoplasm. The catalysed reaction is [protein]-peptidylproline (omega=180) = [protein]-peptidylproline (omega=0). In terms of biological role, involved in protein export. Acts as a chaperone by maintaining the newly synthesized protein in an open conformation. Functions as a peptidyl-prolyl cis-trans isomerase. The polypeptide is Trigger factor (Bordetella bronchiseptica (strain ATCC BAA-588 / NCTC 13252 / RB50) (Alcaligenes bronchisepticus)).